The chain runs to 82 residues: U16-lycotoxin-Ls1a (82 aa).

The N-terminal stretch at 1-22 (MSPKVQALLLLVGLITFLAVHA) is a signal peptide. Positions 23–34 (EEELSETVESER) are excised as a propeptide. 4 disulfides stabilise this stretch: C36–C51, C43–C56, C50–C67, and C58–C65.

Belongs to the neurotoxin 02 (plectoxin) family. 04 (U16-lycotoxin) subfamily. Expressed by the venom gland.

It is found in the secreted. The protein is U16-lycotoxin-Ls1a of Lycosa singoriensis (Wolf spider).